The chain runs to 360 residues: 3-dehydroquinate synthase (360 aa).

NAD(+) is bound by residues 72-77, 106-110, 130-131, Lys143, Lys152, and 170-173; these read DGEEFK, GVVGD, TT, and TLTT. Zn(2+) contacts are provided by Glu185, His248, and His265.

The protein belongs to the sugar phosphate cyclases superfamily. Dehydroquinate synthase family. The cofactor is Co(2+). It depends on Zn(2+) as a cofactor. NAD(+) is required as a cofactor.

It is found in the cytoplasm. It catalyses the reaction 7-phospho-2-dehydro-3-deoxy-D-arabino-heptonate = 3-dehydroquinate + phosphate. The protein operates within metabolic intermediate biosynthesis; chorismate biosynthesis; chorismate from D-erythrose 4-phosphate and phosphoenolpyruvate: step 2/7. Functionally, catalyzes the conversion of 3-deoxy-D-arabino-heptulosonate 7-phosphate (DAHP) to dehydroquinate (DHQ). This chain is 3-dehydroquinate synthase, found in Geobacter metallireducens (strain ATCC 53774 / DSM 7210 / GS-15).